A 154-amino-acid chain; its full sequence is 3-dehydroquinate dehydratase (154 aa).

The active-site Proton acceptor is the Y23. Substrate is bound by residues N75, H81, and D88. H101 acts as the Proton donor in catalysis. Substrate contacts are provided by residues 102–103 and R112; that span reads LS.

This sequence belongs to the type-II 3-dehydroquinase family. Homododecamer.

The enzyme catalyses 3-dehydroquinate = 3-dehydroshikimate + H2O. It functions in the pathway metabolic intermediate biosynthesis; chorismate biosynthesis; chorismate from D-erythrose 4-phosphate and phosphoenolpyruvate: step 3/7. In terms of biological role, catalyzes a trans-dehydration via an enolate intermediate. The polypeptide is 3-dehydroquinate dehydratase (Teredinibacter turnerae (strain ATCC 39867 / T7901)).